A 230-amino-acid chain; its full sequence is Cytidylate kinase (230 aa).

14 to 22 lines the ATP pocket; sequence GPSGVGKSS.

The protein belongs to the cytidylate kinase family. Type 1 subfamily.

The protein resides in the cytoplasm. It catalyses the reaction CMP + ATP = CDP + ADP. The enzyme catalyses dCMP + ATP = dCDP + ADP. This chain is Cytidylate kinase, found in Buchnera aphidicola subsp. Baizongia pistaciae (strain Bp).